The following is a 357-amino-acid chain: Phospho-N-acetylmuramoyl-pentapeptide-transferase (357 aa).

10 helical membrane-spanning segments follow: residues 4–24 (QILF…PLLI), 52–72 (TMGG…SKVI), 77–97 (PTFS…VGFL), 115–135 (AKMA…LQFA), 153–173 (FGWT…ILAM), 186–206 (LATG…VWQF), 228–248 (PLDL…FLWW), 255–275 (IFMG…LAIC), 280–300 (LLVA…VIQV), and 334–354 (FWII…AGWA).

Belongs to the glycosyltransferase 4 family. MraY subfamily. Mg(2+) serves as cofactor.

The protein resides in the cell membrane. The catalysed reaction is UDP-N-acetyl-alpha-D-muramoyl-L-alanyl-gamma-D-glutamyl-meso-2,6-diaminopimeloyl-D-alanyl-D-alanine + di-trans,octa-cis-undecaprenyl phosphate = di-trans,octa-cis-undecaprenyl diphospho-N-acetyl-alpha-D-muramoyl-L-alanyl-D-glutamyl-meso-2,6-diaminopimeloyl-D-alanyl-D-alanine + UMP. Its pathway is cell wall biogenesis; peptidoglycan biosynthesis. Catalyzes the initial step of the lipid cycle reactions in the biosynthesis of the cell wall peptidoglycan: transfers peptidoglycan precursor phospho-MurNAc-pentapeptide from UDP-MurNAc-pentapeptide onto the lipid carrier undecaprenyl phosphate, yielding undecaprenyl-pyrophosphoryl-MurNAc-pentapeptide, known as lipid I. This Streptomyces avermitilis (strain ATCC 31267 / DSM 46492 / JCM 5070 / NBRC 14893 / NCIMB 12804 / NRRL 8165 / MA-4680) protein is Phospho-N-acetylmuramoyl-pentapeptide-transferase.